The primary structure comprises 274 residues: 2,3,4,5-tetrahydropyridine-2,6-dicarboxylate N-succinyltransferase (274 aa).

Substrate contacts are provided by Arg104 and Asp141.

This sequence belongs to the transferase hexapeptide repeat family. Homotrimer.

It localises to the cytoplasm. The catalysed reaction is (S)-2,3,4,5-tetrahydrodipicolinate + succinyl-CoA + H2O = (S)-2-succinylamino-6-oxoheptanedioate + CoA. Its pathway is amino-acid biosynthesis; L-lysine biosynthesis via DAP pathway; LL-2,6-diaminopimelate from (S)-tetrahydrodipicolinate (succinylase route): step 1/3. The sequence is that of 2,3,4,5-tetrahydropyridine-2,6-dicarboxylate N-succinyltransferase from Shewanella putrefaciens (strain CN-32 / ATCC BAA-453).